The following is a 76-amino-acid chain: Small ribosomal subunit protein bS18 (76 aa).

This sequence belongs to the bacterial ribosomal protein bS18 family. Part of the 30S ribosomal subunit. Forms a tight heterodimer with protein bS6.

Functionally, binds as a heterodimer with protein bS6 to the central domain of the 16S rRNA, where it helps stabilize the platform of the 30S subunit. The protein is Small ribosomal subunit protein bS18 of Nitrosomonas europaea (strain ATCC 19718 / CIP 103999 / KCTC 2705 / NBRC 14298).